The primary structure comprises 162 residues: MKIQCEVCEKAEAEVLCCSDEAVLCKPCDIKVHEANKLFQRHHRVALQKDAASATTASGAPLCDICQERKGYFFCLEDRAMLCNDCDEAIHTCNSHQRFLLSGVQVSDQSLTENSECSTSFSSETYQIQSKVSLNSQYSSEETEAGNSGEIVHKNPSVILSP.

Residues C5, C8, C28, H33, C63, C66, C86, and H91 each contribute to the Zn(2+) site. A B box-type 1; atypical zinc finger spans residues 5–47 (CEVCEKAEAEVLCCSDEAVLCKPCDIKVHEANKLFQRHHRVAL). The B box-type 2; atypical zinc finger occupies 63–101 (CDICQERKGYFFCLEDRAMLCNDCDEAIHTCNSHQRFLL). Positions 137–162 (QYSSEETEAGNSGEIVHKNPSVILSP) are disordered.

Its subcellular location is the nucleus. Functionally, probable transcription factor that may be involved in seedling photomorphogenesis. This is B-box zinc finger protein 23 from Arabidopsis thaliana (Mouse-ear cress).